The sequence spans 341 residues: NADH-quinone oxidoreductase subunit H (341 aa).

A run of 9 helical transmembrane segments spans residues 4 to 24 (LVNI…LTYF), 38 to 58 (PSVV…KLLI), 70 to 90 (ILFI…WAVI), 115 to 135 (VGVL…IIAG), 161 to 181 (IGLI…GEMV), 187 to 207 (MPFW…ISLL), 239 to 259 (LFFL…TIFF), 275 to 295 (IPGL…FIWI), and 314 to 334 (VFLP…LFTG).

This sequence belongs to the complex I subunit 1 family. As to quaternary structure, NDH-1 is composed of 14 different subunits. Subunits NuoA, H, J, K, L, M, N constitute the membrane sector of the complex.

Its subcellular location is the cell membrane. The enzyme catalyses a quinone + NADH + 5 H(+)(in) = a quinol + NAD(+) + 4 H(+)(out). Functionally, NDH-1 shuttles electrons from NADH, via FMN and iron-sulfur (Fe-S) centers, to quinones in the respiratory chain. The immediate electron acceptor for the enzyme in this species is believed to be ubiquinone. Couples the redox reaction to proton translocation (for every two electrons transferred, four hydrogen ions are translocated across the cytoplasmic membrane), and thus conserves the redox energy in a proton gradient. This subunit may bind ubiquinone. The polypeptide is NADH-quinone oxidoreductase subunit H (Wolbachia pipientis wMel).